The sequence spans 373 residues: Schlafen-like protein 1 (373 aa).

The segment at 1 to 67 (MAALFEENDS…ELSSEEVDIP (67 aa)) is disordered. Positions 247–373 (KAGAKIEFRT…NQVYRLESSV (127 aa)) are SLFN-like fold.

Belongs to the Schlafen family. Component of the trimeric PUCH (precursor of 21U RNA 5'-end cleavage holoenzyme) complex; consisting of tofu-1, tofu-2 and either slfl-3 or slfl-4; which is required for processing of piRNA precursors. Within the complex, interacts (via N-terminus) with tofu-2 (via N-terminus); the interaction stabilizes tofu-2 and may form a functional nuclease. Within the complex, required for the interaction of tofu-2 (via N-terminus) with slfl-3 (via N-terminus). Interacts (via residues 82-172) with the PETISCO complex subunit tofu-6 (via residues 120-314); the interaction between the PETISCO and PUCH complex members enhances piRNA production in vivo. As to expression, expressed in the germline.

The protein localises to the cytoplasm. Functionally, component of the trimeric PUCH (precursor of 21U RNA 5'-end cleavage holoenzyme) complex, that acts as an endoribonuclease processing the 5'-end of precursor Piwi-interacting RNAs (piRNAs). The PUCH complex consists of tofu-1, tofu-2 and either slfl-3 or slfl-4, with tofu-2 exhibiting endoribonuclease activity. PUCH-mediated processing strictly requires a 7-methyl-G cap (m7 G-cap) and an uracil at position three (U3). PUCH also exhibits a strict bias for piRNA precursors with an A or G at position 1. Mature piRNA production is enhanced by the interaction of PUCH with the PETISCO complex, which is stabilizing piRNA precursors and allows their processing by PUCH. This Caenorhabditis elegans protein is Schlafen-like protein 1.